Here is a 172-residue protein sequence, read N- to C-terminus: Adenine phosphoribosyltransferase (172 aa).

This sequence belongs to the purine/pyrimidine phosphoribosyltransferase family. As to quaternary structure, homodimer.

Its subcellular location is the cytoplasm. The catalysed reaction is AMP + diphosphate = 5-phospho-alpha-D-ribose 1-diphosphate + adenine. It functions in the pathway purine metabolism; AMP biosynthesis via salvage pathway; AMP from adenine: step 1/1. Functionally, catalyzes a salvage reaction resulting in the formation of AMP, that is energically less costly than de novo synthesis. In Clostridium botulinum (strain ATCC 19397 / Type A), this protein is Adenine phosphoribosyltransferase.